The primary structure comprises 498 residues: Glycerol kinase 1 (498 aa).

Position 12 (threonine 12) interacts with ADP. Positions 12, 13, and 14 each coordinate ATP. Threonine 12 is a binding site for sn-glycerol 3-phosphate. Arginine 16 serves as a coordination point for ADP. Residues arginine 82, glutamate 83, tyrosine 134, and aspartate 243 each contribute to the sn-glycerol 3-phosphate site. The glycerol site is built by arginine 82, glutamate 83, tyrosine 134, aspartate 243, and glutamine 244. Positions 265 and 308 each coordinate ADP. Threonine 265, glycine 308, glutamine 312, and glycine 409 together coordinate ATP. Residues glycine 409 and asparagine 413 each contribute to the ADP site.

Belongs to the FGGY kinase family. In terms of assembly, homotetramer and homodimer (in equilibrium).

It catalyses the reaction glycerol + ATP = sn-glycerol 3-phosphate + ADP + H(+). The protein operates within polyol metabolism; glycerol degradation via glycerol kinase pathway; sn-glycerol 3-phosphate from glycerol: step 1/1. Activated by phosphorylation and inhibited by fructose 1,6-bisphosphate (FBP). Key enzyme in the regulation of glycerol uptake and metabolism. Catalyzes the phosphorylation of glycerol to yield sn-glycerol 3-phosphate. The polypeptide is Glycerol kinase 1 (Clostridium tetani (strain Massachusetts / E88)).